We begin with the raw amino-acid sequence, 838 residues long: Polyribonucleotide nucleotidyltransferase (838 aa).

Residues Asp494 and Asp500 each coordinate Mg(2+). One can recognise a KH domain in the interval 561–620 (PRMESMLIDKGKIKNVIGAGGKNVREICEKTGAKIEISQDGTVMIYAVGREAIESAKDMI). An S1 motif domain is found at 630–697 (GKIYSGEVCE…DKDHIQLSMR (68 aa)). The segment covering 747 to 757 (GGASAGRNGRG) has biased composition (gly residues). Positions 747-838 (GGASAGRNGR…PAAPKKPRFF (92 aa)) are disordered. The segment covering 788–810 (AGSSGYSSDSSSGNTKSSSSESS) has biased composition (low complexity). Residues 811 to 820 (GGTGGRGRNG) show a composition bias toward gly residues.

It belongs to the polyribonucleotide nucleotidyltransferase family. The cofactor is Mg(2+).

Its subcellular location is the cytoplasm. The enzyme catalyses RNA(n+1) + phosphate = RNA(n) + a ribonucleoside 5'-diphosphate. Involved in mRNA degradation. Catalyzes the phosphorolysis of single-stranded polyribonucleotides processively in the 3'- to 5'-direction. This Anaplasma phagocytophilum (strain HZ) protein is Polyribonucleotide nucleotidyltransferase.